The sequence spans 447 residues: tRNA-2-methylthio-N(6)-dimethylallyladenosine synthase (447 aa).

In terms of domain architecture, MTTase N-terminal spans 10–128 (KLFCISTYGC…FPEYLHRVLQ (119 aa)). Residues Cys19, Cys55, Cys89, Cys165, Cys169, and Cys172 each coordinate [4Fe-4S] cluster. Positions 151-382 (RKSDVKAFVT…EAINKKVVIK (232 aa)) constitute a Radical SAM core domain. Residues 384 to 447 (KEYEGKVVEV…PFSLIGEIVE (64 aa)) enclose the TRAM domain.

Belongs to the methylthiotransferase family. MiaB subfamily. As to quaternary structure, monomer. The cofactor is [4Fe-4S] cluster.

The protein resides in the cytoplasm. It carries out the reaction N(6)-dimethylallyladenosine(37) in tRNA + (sulfur carrier)-SH + AH2 + 2 S-adenosyl-L-methionine = 2-methylsulfanyl-N(6)-dimethylallyladenosine(37) in tRNA + (sulfur carrier)-H + 5'-deoxyadenosine + L-methionine + A + S-adenosyl-L-homocysteine + 2 H(+). Its function is as follows. Catalyzes the methylthiolation of N6-(dimethylallyl)adenosine (i(6)A), leading to the formation of 2-methylthio-N6-(dimethylallyl)adenosine (ms(2)i(6)A) at position 37 in tRNAs that read codons beginning with uridine. This is tRNA-2-methylthio-N(6)-dimethylallyladenosine synthase from Clostridium perfringens (strain SM101 / Type A).